The primary structure comprises 382 residues: MFGAELVGRETGGQSTDQPYSYRDSARTWDTVTQSVLKAPGWEDSYAVITIEADKHGNGAHQETVAPSDLRQYAKLANASQILYAPLIFVTKLSIFLLYLRVFASARRGMTYLSIHLLIWFNLAFYLANFFLKIFQCIPRAKIWDSNTSGHCININIPILVTAAINVVSDLLMLCLPIICVWRLQMSIRRKLGISAIFAAGIFGCFASIMRLEVSVRDRNTKDPTYDWYTEITCGILASCLPALPTFFRHFFGKARTMLSRSRTRGSSNRSQDRSLEKATELYTLTYPRGQKHHIITDNRLIDQDRELDDDRTQIFSGPSYAVTEARVEGRTPLGQRAYHGDDTVLNGEDGSGHCRGILKVVEVDVESGPGHPTVKCRCDNW.

Residues 1–22 (MFGAELVGRETGGQSTDQPYSY) form a disordered region. Asn-78 carries an N-linked (GlcNAc...) asparagine glycan. Transmembrane regions (helical) follow at residues 80–100 (SQIL…LLYL) and 112–132 (YLSI…NFFL). Asn-147 carries N-linked (GlcNAc...) asparagine glycosylation. Helical transmembrane passes span 159-179 (ILVT…LPII), 192-212 (LGIS…IMRL), and 228-248 (WYTE…PTFF). An N-linked (GlcNAc...) asparagine glycan is attached at Asn-269.

The protein belongs to the SAT4 family.

The protein localises to the membrane. The protein is SAT4 family membrane protein of Emericella nidulans (strain FGSC A4 / ATCC 38163 / CBS 112.46 / NRRL 194 / M139) (Aspergillus nidulans).